The primary structure comprises 354 residues: Protein RecA (354 aa).

Residue 67–74 (GPESSGKT) participates in ATP binding. Positions 333 to 354 (MNEFVPSSEEQAEASLSEDHDQ) are disordered.

Belongs to the RecA family.

Its subcellular location is the cytoplasm. In terms of biological role, can catalyze the hydrolysis of ATP in the presence of single-stranded DNA, the ATP-dependent uptake of single-stranded DNA by duplex DNA, and the ATP-dependent hybridization of homologous single-stranded DNAs. It interacts with LexA causing its activation and leading to its autocatalytic cleavage. The sequence is that of Protein RecA from Laribacter hongkongensis (strain HLHK9).